The chain runs to 334 residues: Replication-associated protein (334 aa).

The CRESS-DNA virus Rep endonuclease domain maps to 9-111 (RLQSKYVFLT…DGDIKTRGDF (103 aa)). The RCR-1 signature appears at 16 to 19 (FLTY). A divalent metal cation-binding residues include E50, H58, and H60. Residues 58 to 60 (HYH) carry the RCR-2 motif. Catalysis depends on Y98, which acts as the For DNA cleavage activity. Positions 98 to 101 (YISK) match the RCR-3 motif. D102 is a binding site for a divalent metal cation. The interval 160-172 (SANKLFPPQPEQY) is oligomerization. 213–220 (GPTRTGKT) contacts ATP. Residues 236-254 (IDFTNYDEHATYNIIDDIP) form a transactivation region. The Nuclear localization signal motif lies at 276 to 286 (KYGKKKKIKGG).

It belongs to the geminiviridae Rep protein family. Homooligomer. Rep binds to repeated DNA motifs (iterons). Forms the O-complex, which is a Rep-DNA complex involved in the initiation of RCR. Part of the C- and V-complexes which are RepA-Rep-DNA complexes involved in the c-sense and v-sense transcription. Mg(2+) is required as a cofactor. Mn(2+) serves as cofactor.

The protein resides in the host nucleus. Essential for the replication of viral ssDNA. The closed circular ssDNA genome is first converted to a superhelical dsDNA. Rep binds a specific region at the genome origin of replication. It introduces an endonucleolytic nick within the conserved sequence 5'-TAATATTAC-3' in the intergenic region of the genome present in all geminiviruses, thereby initiating the rolling circle replication (RCR). Following cleavage, binds covalently to the 5'-phosphate of DNA as a tyrosyl ester. The cleavage gives rise to a free 3'-OH that serves as a primer for the cellular DNA polymerase. The polymerase synthesizes the (+) strand DNA by rolling circle mechanism. After one round of replication, a Rep-catalyzed nucleotidyl transfer reaction releases a circular single-stranded virus genome, thereby terminating the replication. Displays origin-specific DNA cleavage, nucleotidyl transferase, ATPase and helicase activities. Acts a an inhibitor of C-sense gene transcription. This Phaseolus vulgaris (Kidney bean) protein is Replication-associated protein.